The following is a 396-amino-acid chain: Probable sugar efflux transporter (396 aa).

12 helical membrane passes run 15-35 (VVTLAIAAFIFNTTEFVPVGL), 50-70 (VGIMLTIYAWVVAVMSLPFML), 81-101 (LICLFVLFIASHVLSFLAWNF), 103-123 (VLVISRIGIAFAHAIFWSITA), 136-156 (AQALSLIATGTALAMVLGLPI), 169-189 (TFFAIGMGALITLLCLIKLLP), 209-229 (PALMSLYVLTVVVVTAHYTAY), 246-266 (FATVLLLILGGAGIIGSLVFG), 275-295 (SLVSIAIALLVVCLLLLLPAA), 301-321 (LAILSIFWGIAIMVIGLGMQV), 333-353 (VAMALFSGIFNIGIGAGALVG), and 364-384 (AIGYIGDIPACAALVWAVLIF).

Belongs to the major facilitator superfamily. SotB (TC 2.A.1.2) family.

It localises to the cell inner membrane. Its function is as follows. Involved in the efflux of sugars. The physiological role may be the reduction of the intracellular concentration of toxic sugars or sugar metabolites. This Salmonella paratyphi C (strain RKS4594) protein is Probable sugar efflux transporter.